The chain runs to 182 residues: Large ribosomal subunit protein bL25 (182 aa).

The protein belongs to the bacterial ribosomal protein bL25 family. CTC subfamily. As to quaternary structure, part of the 50S ribosomal subunit; part of the 5S rRNA/L5/L18/L25 subcomplex. Contacts the 5S rRNA. Binds to the 5S rRNA independently of L5 and L18.

Its function is as follows. This is one of the proteins that binds to the 5S RNA in the ribosome where it forms part of the central protuberance. The protein is Large ribosomal subunit protein bL25 of Borrelia garinii subsp. bavariensis (strain ATCC BAA-2496 / DSM 23469 / PBi) (Borreliella bavariensis).